The sequence spans 177 residues: Interleukin-1 receptor antagonist protein (177 aa).

The N-terminal stretch at 1–25 (MRPSRSTRRHLISLLLFLFHSETAC) is a signal peptide. A disulfide bond links cysteine 91 and cysteine 141. Residue asparagine 109 is glycosylated (N-linked (GlcNAc...) asparagine).

This sequence belongs to the IL-1 family.

Its subcellular location is the secreted. Its function is as follows. Anti-inflammatory antagonist of interleukin-1 family of proinflammatory cytokines such as interleukin-1beta/IL1B and interleukin-1alpha/IL1A. Protects from immune dysregulation and uncontrolled systemic inflammation triggered by IL1 for a range of innate stimulatory agents such as pathogens. The sequence is that of Interleukin-1 receptor antagonist protein (IL1RN) from Oryctolagus cuniculus (Rabbit).